A 117-amino-acid chain; its full sequence is Immunoglobulin kappa variable 9-129 (117 aa).

The first 22 residues, 1 to 22, serve as a signal peptide directing secretion; it reads MDMRAPAQVFGFLLLWFPGARC. The interval 23–45 is framework-1; it reads DIQMTQSPSSLSASLGERVSLTC. A disulfide bridge connects residues Cys45 and Cys110. The interval 46–56 is complementarity-determining-1; sequence RASQDIHGYLN. The framework-2 stretch occupies residues 57 to 71; that stretch reads LFQQKPGETIKHLIY. A complementarity-determining-2 region spans residues 72 to 78; sequence ETSNLDS. A framework-3 region spans residues 79-110; it reads GVPKRFSGSRSGSDYSLIIGSLESEDFADYYC. The complementarity-determining-3 stretch occupies residues 111-117; it reads LQYASSP.

This is Immunoglobulin kappa variable 9-129 from Mus musculus (Mouse).